The chain runs to 1967 residues: RQC trigger complex helicase SLH1 (1967 aa).

The Helicase ATP-binding 1 domain occupies 297–485 (PVAYKTNENM…FLGVNRQIGM (189 aa)). 310-317 (APTGAGKT) serves as a coordination point for ATP. The short motif at 427–430 (DEVH) is the DEVH box element. Residues 516–735 (NIDKVAYDKL…NVDEAIEWLG (220 aa)) form the Helicase C-terminal 1 domain. Residues 795–1100 (AKDLGRVSSD…GCESTHAISF (306 aa)) form the SEC63 1 domain. The Helicase ATP-binding 2 domain maps to 1149–1324 (YTLYNTNENA…WLGVKDHGLY (176 aa)). 1162 to 1169 (SPTGSGKT) is an ATP binding site. Positions 1266–1269 (DEIH) match the DEAH box motif. The region spanning 1355–1550 (MNKPVFMAIK…SLHKVLDDHL (196 aa)) is the Helicase C-terminal 2 domain. The SEC63 2 domain occupies 1626–1776 (ATPFLSISSY…MMQCIKQGYW (151 aa)).

Belongs to the helicase family. SKI2 subfamily. Component of the RQT (ribosome quality control trigger) complex, composed of SLH1, CUE3, and RQT4. Interacts with CUE3. Interacts with RQT4. Interacts with HEL2. Associates with translating ribosomes.

It localises to the cytoplasm. It is found in the cytosol. It catalyses the reaction ATP + H2O = ADP + phosphate + H(+). In terms of biological role, involved in activation of the ribosome quality control (RQC) pathway, a pathway that degrades nascent peptide chains during problematic translation. Drives the splitting of stalled ribosomes that are polyubiquitinated in a HEL2-dependent manner, as part of the ribosome quality control trigger (RQT) complex. Also represses the translation of non-poly(A) mRNAs together with SKI2. May block translation by inhibiting translation initiation factor 5B (FUN12) action on mRNAs lacking a 3' poly(A) structure. Involved in antiviral defense, preventing L-A dsRNA virus propagation by specifically blocking translation of viral mRNAs. The chain is RQC trigger complex helicase SLH1 from Saccharomyces cerevisiae (strain ATCC 204508 / S288c) (Baker's yeast).